Reading from the N-terminus, the 167-residue chain is Iron-sulfur cluster assembly protein 1 (167 aa).

The transit peptide at 1-50 (MMLKQAAKKALGLTSRQSTPWSVGILRTYHENVIDHYDNPRNVGSFDKND) directs the protein to the mitochondrion.

It belongs to the NifU family. In terms of assembly, component of the core Fe-S cluster (ISC) assembly machinery. Interacts with HSCB. Requires [2Fe-2S] cluster as cofactor. Expressed in roots, stems, leaves, flowers, pollen and siliques.

It localises to the mitochondrion matrix. It is found in the cytoplasm. The protein resides in the cytosol. The protein operates within cofactor biosynthesis; iron-sulfur cluster biosynthesis. Functionally, scaffold protein for the de novo synthesis of iron-sulfur (Fe-S) clusters within mitochondria, which is required for maturation of both mitochondrial and cytoplasmic [2Fe-2S] and [4Fe-4S] proteins. First, a [2Fe-2S] cluster is transiently assembled on the scaffold protein ISCU (ISU1, ISU2 or ISU3). In a second step, the cluster is released from ISCU, transferred to a glutaredoxin, followed by the formation of mitochondrial [2Fe-2S] proteins, the synthesis of [4Fe-4S] clusters and their target-specific insertion into the recipient apoproteins. Cluster assembly on ISCU depends on the function of the cysteine desulfurase complex NFS1-ISD11, which serves as the sulfur donor for cluster synthesis, the iron-binding protein frataxin as the putative iron donor, and the electron transfer chain comprised of ferredoxin reductase and ferredoxin, which receive their electrons from NADH. This is Iron-sulfur cluster assembly protein 1 (ISU1) from Arabidopsis thaliana (Mouse-ear cress).